Here is a 270-residue protein sequence, read N- to C-terminus: Putative phosphoenolpyruvate synthase regulatory protein (270 aa).

150-157 (GVSRCGKT) contacts ADP.

This sequence belongs to the pyruvate, phosphate/water dikinase regulatory protein family. PSRP subfamily.

The catalysed reaction is [pyruvate, water dikinase] + ADP = [pyruvate, water dikinase]-phosphate + AMP + H(+). It catalyses the reaction [pyruvate, water dikinase]-phosphate + phosphate + H(+) = [pyruvate, water dikinase] + diphosphate. Bifunctional serine/threonine kinase and phosphorylase involved in the regulation of the phosphoenolpyruvate synthase (PEPS) by catalyzing its phosphorylation/dephosphorylation. This Shewanella putrefaciens (strain CN-32 / ATCC BAA-453) protein is Putative phosphoenolpyruvate synthase regulatory protein.